The following is a 160-amino-acid chain: Small ribosomal subunit protein uS7 (160 aa).

It belongs to the universal ribosomal protein uS7 family. As to quaternary structure, part of the 30S ribosomal subunit. Contacts proteins S9 and S11.

Its function is as follows. One of the primary rRNA binding proteins, it binds directly to 16S rRNA where it nucleates assembly of the head domain of the 30S subunit. Is located at the subunit interface close to the decoding center, probably blocks exit of the E-site tRNA. The polypeptide is Small ribosomal subunit protein uS7 (Rickettsia massiliae (strain Mtu5)).